The following is a 146-amino-acid chain: Large ribosomal subunit protein uL15 (146 aa).

Positions 1–18 (MKLHELKAAEGTRKERNR) are enriched in basic and acidic residues. Positions 1 to 58 (MKLHELKAAEGTRKERNRVGRGMSSGNGKTSGRGHKGQKARSGGGVRPGFEGGQMPLF) are disordered. The span at 42-52 (SGGGVRPGFEG) shows a compositional bias: gly residues.

It belongs to the universal ribosomal protein uL15 family. Part of the 50S ribosomal subunit.

In terms of biological role, binds to the 23S rRNA. The polypeptide is Large ribosomal subunit protein uL15 (Oceanobacillus iheyensis (strain DSM 14371 / CIP 107618 / JCM 11309 / KCTC 3954 / HTE831)).